Reading from the N-terminus, the 579-residue chain is Glutamine--tRNA ligase (579 aa).

Residues 41–51 (PEPNGYLHIGH) carry the 'HIGH' region motif. ATP contacts are provided by residues 42-44 (EPN) and 48-54 (HIGHAKA). Positions 74 and 218 each coordinate L-glutamine. Residues T237, 285–286 (RL), and 293–295 (MSK) contribute to the ATP site. The short motif at 292 to 296 (VMSKR) is the 'KMSKS' region element.

The protein belongs to the class-I aminoacyl-tRNA synthetase family. As to quaternary structure, monomer.

It is found in the cytoplasm. The enzyme catalyses tRNA(Gln) + L-glutamine + ATP = L-glutaminyl-tRNA(Gln) + AMP + diphosphate. In Xanthomonas oryzae pv. oryzae (strain MAFF 311018), this protein is Glutamine--tRNA ligase.